The primary structure comprises 541 residues: Glucose-6-phosphate isomerase (541 aa).

The Proton donor role is filled by Glu346. Residues His377 and Lys506 contribute to the active site.

Belongs to the GPI family.

It localises to the cytoplasm. It carries out the reaction alpha-D-glucose 6-phosphate = beta-D-fructose 6-phosphate. The protein operates within carbohydrate biosynthesis; gluconeogenesis. It functions in the pathway carbohydrate degradation; glycolysis; D-glyceraldehyde 3-phosphate and glycerone phosphate from D-glucose: step 2/4. Functionally, catalyzes the reversible isomerization of glucose-6-phosphate to fructose-6-phosphate. In Sinorhizobium medicae (strain WSM419) (Ensifer medicae), this protein is Glucose-6-phosphate isomerase.